A 171-amino-acid polypeptide reads, in one-letter code: Co-chaperone protein HscB (171 aa).

In terms of domain architecture, J spans 2–74 (DYFTLFGLPA…LTRAEYLLSL (73 aa)).

It belongs to the HscB family. As to quaternary structure, interacts with HscA and stimulates its ATPase activity. Interacts with IscU.

In terms of biological role, co-chaperone involved in the maturation of iron-sulfur cluster-containing proteins. Seems to help targeting proteins to be folded toward HscA. The polypeptide is Co-chaperone protein HscB (Salmonella choleraesuis (strain SC-B67)).